Reading from the N-terminus, the 362-residue chain is Probable tocopherol O-methyltransferase, chloroplastic (362 aa).

A chloroplast-targeting transit peptide spans 1-55; that stretch reads MAHAAAATGALAPLHPLLRCTSRHLCASASPRAGLCLHHHRRRRRSSRRTKLAVR. Residues 141 to 150 are SAM motif I; the sequence is VVDVGCGIGG. An SAM motif II region spans residues 204 to 212; that stretch reads GQFDLVWSM. The segment at 231–240 is SAM motif III; it reads VAAPGARIII.

The protein belongs to the class I-like SAM-binding methyltransferase superfamily. gTMT family.

The protein localises to the plastid. Its subcellular location is the chloroplast. It catalyses the reaction gamma-tocopherol + S-adenosyl-L-methionine = (+)-alpha-tocopherol + S-adenosyl-L-homocysteine + H(+). The catalysed reaction is delta-tocotrienol + S-adenosyl-L-methionine = beta-tocotrienol + S-adenosyl-L-homocysteine + H(+). The enzyme catalyses gamma-tocotrienol + S-adenosyl-L-methionine = alpha-tocotrienol + S-adenosyl-L-homocysteine + H(+). It carries out the reaction delta-tocopherol + S-adenosyl-L-methionine = beta-tocopherol + S-adenosyl-L-homocysteine + H(+). It participates in cofactor biosynthesis; tocopherol biosynthesis. Involved in the synthesis of tocopherol (vitamin E). Methylates gamma- and delta-tocopherol to form beta- and alpha-tocopherol, respectively. This is Probable tocopherol O-methyltransferase, chloroplastic (VTE4) from Oryza sativa subsp. japonica (Rice).